The sequence spans 105 residues: Small ribosomal subunit protein uS10 (105 aa).

The protein belongs to the universal ribosomal protein uS10 family. Part of the 30S ribosomal subunit.

Involved in the binding of tRNA to the ribosomes. The chain is Small ribosomal subunit protein uS10 from Francisella tularensis subsp. mediasiatica (strain FSC147).